The primary structure comprises 233 residues: uncharacterized protein (233 aa).

The protein belongs to the RHS family.

This is an uncharacterized protein from Escherichia coli (strain K12).